An 804-amino-acid polypeptide reads, in one-letter code: Phenylalanine--tRNA ligase beta subunit (804 aa).

One can recognise a tRNA-binding domain in the interval arginine 38–alanine 148. One can recognise a B5 domain in the interval histidine 401–proline 476. Mg(2+) is bound by residues aspartate 454, aspartate 460, glutamate 463, and glutamate 464. The region spanning serine 710–arginine 803 is the FDX-ACB domain.

The protein belongs to the phenylalanyl-tRNA synthetase beta subunit family. Type 1 subfamily. As to quaternary structure, tetramer of two alpha and two beta subunits. Requires Mg(2+) as cofactor.

It localises to the cytoplasm. It carries out the reaction tRNA(Phe) + L-phenylalanine + ATP = L-phenylalanyl-tRNA(Phe) + AMP + diphosphate + H(+). The chain is Phenylalanine--tRNA ligase beta subunit from Brucella suis biovar 1 (strain 1330).